The chain runs to 310 residues: Transcriptional regulator NRG1 (310 aa).

Residues 85-131 are disordered; it reads YYMGPPAQHRLPTPPPYPMSSPTTATAATPLSQQSPHLQPQQTLQQP. Residues 104–131 show a composition bias toward low complexity; the sequence is SSPTTATAATPLSQQSPHLQPQQTLQQP. 2 C2H2-type zinc fingers span residues 228 to 250 and 256 to 280; these read HVCKVCSRSFTTSGHLARHNRIH and HQCPWPTCEARFARQDNCNQHYKTH.

The protein resides in the nucleus. Functionally, transcriptional repressor that binds NRG1 response elements (NRE) of target promoters. Involved in regulation of chlamydospore formation, hyphal growth, virulence, and stress response. Plays a key role in regulating true hyphal growth, but does not regulate pseudohyphal growth in the same fashion. Directs transcriptional repression of a subset of filament-specific genes such as HWP1, HYR1, ALS8, HWP1, or ECE1; via the TUP1 pathway. Functions with UME6 in a negative feedback loop to control the level and duration of filament-specific gene expression in response to inducing conditions. Plays a key role in biofilm formation and dispersion. Also plays the role of a negative regulator of virulence in mice models. Required for the expression of the cell wall genes RBR1. The chain is Transcriptional regulator NRG1 (NRG1) from Candida albicans (strain SC5314 / ATCC MYA-2876) (Yeast).